The following is a 118-amino-acid chain: RNA guanine-N7 methyltransferase activating subunit (118 aa).

Residue threonine 2 is modified to N-acetylthreonine. Residues 2-55 (TDTAEAVPNFEEMFASRFTENDKEYQEYLKRPPESPPIVEEWNSRAGGNQRNRG) are interaction with RNMT. Positions 30 to 118 (LKRPPESPPI…YNQRPPYGYY (89 aa)) are disordered. At serine 36 the chain carries Phosphoserine. Positions 36 to 42 (SPPIVEE) match the RNMT-activating domain motif. A compositionally biased stretch (low complexity) spans 45–56 (SRAGGNQRNRGN). The segment at 56-118 (NRLQDNRQFR…YNQRPPYGYY (63 aa)) is RNA-binding. The span at 57-70 (RLQDNRQFRGRDNR) shows a compositional bias: basic and acidic residues. Positions 76-93 (DNRSNQWHGRSWGNNYPQ) are enriched in polar residues. The residue at position 85 (arginine 85) is an Omega-N-methylarginine. Serine 86 carries the post-translational modification Phosphoserine. Positions 98–109 (PYYPQQYGHYGY) are enriched in low complexity.

The protein belongs to the RAM family. As to quaternary structure, interacts with RNMT; this interaction enhances mRNA binding and cap methyltransferase activity.

Its subcellular location is the nucleus. Functionally, regulatory subunit of the mRNA-capping methyltransferase RNMT:RAMAC complex that methylates the N7 position of the added guanosine to the 5'-cap structure of mRNAs. Promotes the recruitment of the methyl donor, S-adenosyl-L-methionine, to RNMT. Regulates RNMT expression by a post-transcriptional stabilizing mechanism. Binds RNA. The polypeptide is RNA guanine-N7 methyltransferase activating subunit (RAMAC) (Pongo abelii (Sumatran orangutan)).